Consider the following 264-residue polypeptide: Hemin import ATP-binding protein HmuV (264 aa).

Residues 10-246 (LQAQNLSYSI…HTLRKWYQAD (237 aa)) form the ABC transporter domain. An ATP-binding site is contributed by 42-49 (GPNGAGKS).

The protein belongs to the ABC transporter superfamily. Heme (hemin) importer (TC 3.A.1.14.5) family. In terms of assembly, the complex is composed of two ATP-binding proteins (HmuV), two transmembrane proteins (HmuU) and a solute-binding protein (HmuT).

The protein localises to the cell inner membrane. Its function is as follows. Part of the ABC transporter complex HmuTUV involved in hemin import. Responsible for energy coupling to the transport system. The sequence is that of Hemin import ATP-binding protein HmuV from Photorhabdus laumondii subsp. laumondii (strain DSM 15139 / CIP 105565 / TT01) (Photorhabdus luminescens subsp. laumondii).